The sequence spans 302 residues: FeMo cofactor biosynthesis protein NifB (302 aa).

Positions 22 to 264 (HDKYGRVHLP…PQFRACGQCR (243 aa)) constitute a Radical SAM core domain. Cys-36, Cys-40, and Cys-43 together coordinate [4Fe-4S] cluster. The S-adenosyl-L-methionine site is built by Gly-91, Thr-142, and Ile-194. 2 residues coordinate [4Fe-4S] cluster: Cys-260 and Cys-263.

The protein belongs to the radical SAM superfamily. NifB family. Monomer. The cofactor is [4Fe-4S] cluster.

The protein operates within cofactor biosynthesis; Fe-Mo cofactor biosynthesis. In terms of biological role, involved in the biosynthesis of the iron-molybdenum cofactor (FeMo-co or M-cluster) found in the dinitrogenase enzyme of the nitrogenase complex in nitrogen-fixing microorganisms. NifB catalyzes the crucial step of radical SAM-dependent carbide insertion that occurs concomitant with the insertion of a 9th sulfur and the rearrangement/coupling of two [4Fe-4S] clusters into a [8Fe-9S-C] cluster, the precursor to the M-cluster. The sequence is that of FeMo cofactor biosynthesis protein NifB from Methanocaldococcus infernus (strain DSM 11812 / JCM 15783 / ME).